The primary structure comprises 378 residues: Squalene methyltransferase 2 (378 aa).

A helical transmembrane segment spans residues 17-37; the sequence is LLTVKGATGLIAALILGYIII.

It belongs to the class I-like SAM-binding methyltransferase superfamily. Erg6/SMT family.

The protein resides in the microsome membrane. The enzyme catalyses squalene + 2 S-adenosyl-L-methionine = 3,22-dimethyl-1,2,23,24-tetradehydro-2,3,22,23-tetrahydrosqualene + 2 S-adenosyl-L-homocysteine + 2 H(+). In terms of biological role, converts squalene to mono- and dimethyl derivatives, but not to tri- and tetramethylated products. Unable to methylate cycloartenol, zymosterol or lanosterol. Methylates both C-3 and C22 positions, but only C-3 position in monomethylated products. Produces mainly monomethylated squalene and only 20% of dimethylated squalene. The chain is Squalene methyltransferase 2 (TMT-2) from Botryococcus braunii (Green alga).